Here is a 384-residue protein sequence, read N- to C-terminus: S-adenosylmethionine synthase (384 aa).

His-15 contacts ATP. Asp-17 is a binding site for Mg(2+). Position 43 (Glu-43) interacts with K(+). Residues Glu-56 and Gln-99 each coordinate L-methionine. A flexible loop region spans residues 99–109 (QSSDINQGVDR). ATP-binding positions include 164 to 166 (DAK), 230 to 231 (RF), Asp-239, 245 to 246 (RK), Ala-262, and Lys-266. Residue Asp-239 coordinates L-methionine. Lys-270 is an L-methionine binding site.

This sequence belongs to the AdoMet synthase family. Homotetramer; dimer of dimers. Mg(2+) is required as a cofactor. The cofactor is K(+).

It is found in the cytoplasm. It catalyses the reaction L-methionine + ATP + H2O = S-adenosyl-L-methionine + phosphate + diphosphate. It functions in the pathway amino-acid biosynthesis; S-adenosyl-L-methionine biosynthesis; S-adenosyl-L-methionine from L-methionine: step 1/1. In terms of biological role, catalyzes the formation of S-adenosylmethionine (AdoMet) from methionine and ATP. The overall synthetic reaction is composed of two sequential steps, AdoMet formation and the subsequent tripolyphosphate hydrolysis which occurs prior to release of AdoMet from the enzyme. The protein is S-adenosylmethionine synthase of Pasteurella multocida (strain Pm70).